A 145-amino-acid chain; its full sequence is D-aminoacyl-tRNA deacylase (145 aa).

A Gly-cisPro motif, important for rejection of L-amino acids motif is present at residues 137-138; the sequence is GP.

The protein belongs to the DTD family. In terms of assembly, homodimer.

Its subcellular location is the cytoplasm. It catalyses the reaction glycyl-tRNA(Ala) + H2O = tRNA(Ala) + glycine + H(+). It carries out the reaction a D-aminoacyl-tRNA + H2O = a tRNA + a D-alpha-amino acid + H(+). In terms of biological role, an aminoacyl-tRNA editing enzyme that deacylates mischarged D-aminoacyl-tRNAs. Also deacylates mischarged glycyl-tRNA(Ala), protecting cells against glycine mischarging by AlaRS. Acts via tRNA-based rather than protein-based catalysis; rejects L-amino acids rather than detecting D-amino acids in the active site. By recycling D-aminoacyl-tRNA to D-amino acids and free tRNA molecules, this enzyme counteracts the toxicity associated with the formation of D-aminoacyl-tRNA entities in vivo and helps enforce protein L-homochirality. The polypeptide is D-aminoacyl-tRNA deacylase (Pectobacterium atrosepticum (strain SCRI 1043 / ATCC BAA-672) (Erwinia carotovora subsp. atroseptica)).